A 1496-amino-acid chain; its full sequence is DNA-directed RNA polymerase subunit beta' (1496 aa).

Cys67, Cys69, Cys82, and Cys85 together coordinate Zn(2+). Positions 499, 501, and 503 each coordinate Mg(2+). Residues Cys867, Cys943, Cys950, and Cys953 each contribute to the Zn(2+) site.

It belongs to the RNA polymerase beta' chain family. As to quaternary structure, the RNAP catalytic core consists of 2 alpha, 1 beta, 1 beta' and 1 omega subunit. When a sigma factor is associated with the core the holoenzyme is formed, which can initiate transcription. It depends on Mg(2+) as a cofactor. Zn(2+) is required as a cofactor.

The catalysed reaction is RNA(n) + a ribonucleoside 5'-triphosphate = RNA(n+1) + diphosphate. Its function is as follows. DNA-dependent RNA polymerase catalyzes the transcription of DNA into RNA using the four ribonucleoside triphosphates as substrates. This chain is DNA-directed RNA polymerase subunit beta', found in Chlorobium limicola (strain DSM 245 / NBRC 103803 / 6330).